The chain runs to 130 residues: Small ribosomal subunit protein uS9 (130 aa).

This sequence belongs to the universal ribosomal protein uS9 family.

This Shigella flexneri protein is Small ribosomal subunit protein uS9 (rpsI).